A 119-amino-acid polypeptide reads, in one-letter code: Large ribosomal subunit protein bL20 (119 aa).

It belongs to the bacterial ribosomal protein bL20 family.

In terms of biological role, binds directly to 23S ribosomal RNA and is necessary for the in vitro assembly process of the 50S ribosomal subunit. It is not involved in the protein synthesizing functions of that subunit. This chain is Large ribosomal subunit protein bL20, found in Polaromonas sp. (strain JS666 / ATCC BAA-500).